A 335-amino-acid chain; its full sequence is Phosphate acyltransferase (335 aa).

This sequence belongs to the PlsX family. As to quaternary structure, homodimer. Probably interacts with PlsY.

The protein resides in the cytoplasm. It catalyses the reaction a fatty acyl-[ACP] + phosphate = an acyl phosphate + holo-[ACP]. It participates in lipid metabolism; phospholipid metabolism. Functionally, catalyzes the reversible formation of acyl-phosphate (acyl-PO(4)) from acyl-[acyl-carrier-protein] (acyl-ACP). This enzyme utilizes acyl-ACP as fatty acyl donor, but not acyl-CoA. This is Phosphate acyltransferase from Clostridium botulinum (strain ATCC 19397 / Type A).